The sequence spans 371 residues: Anhydro-N-acetylmuramic acid kinase (371 aa).

Position 12 to 19 (12 to 19) interacts with ATP; that stretch reads GTSADGID.

This sequence belongs to the anhydro-N-acetylmuramic acid kinase family.

It catalyses the reaction 1,6-anhydro-N-acetyl-beta-muramate + ATP + H2O = N-acetyl-D-muramate 6-phosphate + ADP + H(+). It functions in the pathway amino-sugar metabolism; 1,6-anhydro-N-acetylmuramate degradation. The protein operates within cell wall biogenesis; peptidoglycan recycling. In terms of biological role, catalyzes the specific phosphorylation of 1,6-anhydro-N-acetylmuramic acid (anhMurNAc) with the simultaneous cleavage of the 1,6-anhydro ring, generating MurNAc-6-P. Is required for the utilization of anhMurNAc either imported from the medium or derived from its own cell wall murein, and thus plays a role in cell wall recycling. The protein is Anhydro-N-acetylmuramic acid kinase of Saccharophagus degradans (strain 2-40 / ATCC 43961 / DSM 17024).